A 578-amino-acid chain; its full sequence is Alpha-(1,6)-fucosyltransferase (578 aa).

Residues 1–9 lie on the Cytoplasmic side of the membrane; the sequence is MRPWTGSWR. The chain crosses the membrane as a helical; Signal-anchor for type II membrane protein span at residues 10–30; that stretch reads WIMLILFAWGTLLFYIGGHLV. Topologically, residues 31 to 578 are lumenal; that stretch reads RDNENPDHSS…KYPTYQEAEK (548 aa). 3 disulfides stabilise this stretch: Cys-207–Cys-269, Cys-215–Cys-233, and Cys-221–Cys-225. One can recognise a GT23 domain in the interval 209–496; the sequence is KAKKLVCNIN…PDASAHFHSL (288 aa). The short motif at 302–308 is the SH3-binding element; sequence PRPPYLP. The segment at 368 to 369 is important for donor substrate binding; the sequence is RR. The cysteines at positions 468 and 475 are disulfide-linked. The region spanning 505 to 566 is the SH3 domain; sequence QNAHNQLAIY…PSYKVKEKIE (62 aa).

The protein belongs to the glycosyltransferase 23 family.

It is found in the golgi apparatus. It localises to the golgi stack membrane. The catalysed reaction is N(4)-{beta-D-GlcNAc-(1-&gt;2)-alpha-D-Man-(1-&gt;3)-[beta-D-GlcNAc-(1-&gt;2)-alpha-D-Man-(1-&gt;6)]-beta-D-Man-(1-&gt;4)-beta-D-GlcNAc-(1-&gt;4)-beta-D-GlcNAc}-L-asparaginyl-[protein] + GDP-beta-L-fucose = an N(4)-{beta-D-GlcNAc-(1-&gt;2)-alpha-D-Man-(1-&gt;3)-[beta-D-GlcNAc-(1-&gt;2)-alpha-D-Man-(1-&gt;6)]-beta-D-Man-(1-&gt;4)-beta-D-GlcNAc-(1-&gt;4)-[alpha-L-Fuc-(1-&gt;6)]-beta-D-GlcNAc}-L-asparaginyl-[protein] + GDP + H(+). It participates in protein modification; protein glycosylation. Its function is as follows. Catalyzes the addition of fucose in alpha 1-6 linkage to the first GlcNAc residue, next to the peptide chains in N-glycans. This chain is Alpha-(1,6)-fucosyltransferase (fut8), found in Xenopus tropicalis (Western clawed frog).